Reading from the N-terminus, the 101-residue chain is Small ribosomal subunit protein uS14A (101 aa).

This sequence belongs to the universal ribosomal protein uS14 family. Part of the 30S ribosomal subunit. Contacts proteins S3 and S10.

Functionally, binds 16S rRNA, required for the assembly of 30S particles and may also be responsible for determining the conformation of the 16S rRNA at the A site. In Mycolicibacterium smegmatis (strain ATCC 700084 / mc(2)155) (Mycobacterium smegmatis), this protein is Small ribosomal subunit protein uS14A.